Here is a 33-residue protein sequence, read N- to C-terminus: Alpha-amanitin proprotein (33 aa).

A propeptide spanning residues 1-10 (MSDINATRLP) is cleaved from the precursor. The residue at position 11 (I11) is a (3R,4R)-4,5-dihydroxyisoleucine; in form alpha-amanitin. I11 carries the (3R,4S)-4-hydroxyisoleucine; in form gamma-amanitin modification. Residues 11–18 (IWGIGCNP) constitute a cross-link (cyclopeptide (Ile-Pro)). The 2'-cysteinyl-6'-hydroxytryptophan sulfoxide (Trp-Cys) cross-link spans 12–16 (WGIGC). P18 bears the 4-hydroxyproline mark. Positions 19–33 (CVGDEVTALLTRGEA) are excised as a propeptide.

This sequence belongs to the MSDIN fungal toxin family. Processed by the macrocyclase-peptidase enzyme POPB to yield a toxic cyclic decapeptide. POPB first removes 10 residues from the N-terminus. Conformational trapping of the remaining peptide forces the enzyme to release this intermediate rather than proceed to macrocyclization. The enzyme rebinds the remaining peptide in a different conformation and catalyzes macrocyclization of the N-terminal 8 residues.

In terms of biological role, major toxin belonging to the bicyclic octapeptides amatoxins that acts by binding non-competitively to RNA polymerase II and greatly slowing the elongation of transcripts from target promoters. The protein is Alpha-amanitin proprotein of Amanita fuligineoides.